The chain runs to 203 residues: MCLIMETDDHNGDVLAPPSNFSMVEDGIYRSGFPRPENFSFLKTLNLRSIIYLCPEPYPEENLKFLEANNIKLYQFGIEGKTDPPTPMPKDTVLDALKVLVDVRNHPILIHCKRGKHRTGCLVGCLRKVQSWCLSSVLEEYQKNAGLKWRQRDLNFIEAFDIVSLRQCLLSIMYQYHGYGFKRRRLAYEEENVKTPKPQAARV.

Residues 20–169 (NFSMVEDGIY…FDIVSLRQCL (150 aa)) enclose the Tyrosine-protein phosphatase domain. The tract at residues 76–88 (FGIEGKTDPPTPM) is WPD loop important for active site topology. Catalysis depends on Cys112, which acts as the Phosphocysteine intermediate.

It belongs to the protein-tyrosine phosphatase family. Atypical dual-specificity phosphatase Siw14-like subfamily. Interacts with FLZ1. Highly expressed in roots, stems and flowers. Expressed at low levels in leaves and siliques.

Its subcellular location is the nucleus. It carries out the reaction 5-diphospho-1D-myo-inositol 1,2,3,4,6-pentakisphosphate + H2O = 1D-myo-inositol hexakisphosphate + phosphate + H(+). The catalysed reaction is 1,5-bis(diphospho)-1D-myo-inositol 2,3,4,6-tetrakisphosphate + H2O = 1-diphospho-1D-myo-inositol 2,3,4,5,6-pentakisphosphate + phosphate + 2 H(+). The enzyme catalyses 3,5-bis(diphospho)-1D-myo-inositol 1,2,4,6-tetrakisphosphate + H2O = 3-diphospho-1D-myo-inositol 1,2,4,5,6-pentakisphosphate + phosphate + 2 H(+). It catalyses the reaction 6-diphospho-1D-myo-inositol pentakisphosphate + H2O = 1D-myo-inositol hexakisphosphate + phosphate + H(+). Cleaves the beta-phosphate at the 5-position of soluble inositol pyrophosphates. Has highest activity on 5-diphosphoinositol 1,2,3,4,6-pentakisphosphate (5-InsP(7)), 1,5-bis-diphosphoinositol 2,3,4,6-tetrakisphosphate (1,5-InsP(8)) and 3,5-InsP(8). Possesses phosphotyrosine phosphatase activity in vitro. Dephosphorylates the phosphoinositides PI(3,5)P2. Hydrolyzes para-nitrophenyl phosphate and O-methylfluorescein phosphate in vitro. The chain is Inositol diphosphatase DSP3 from Arabidopsis thaliana (Mouse-ear cress).